Reading from the N-terminus, the 104-residue chain is DNA-directed RNA polymerase subunit Rpo13 (104 aa).

2 disordered regions span residues 1–34 (MVSG…EEFP) and 76–104 (EKRD…SVEG). Over residues 7–31 (TEEEKEGTNDEEVSEEREVEETSEE) the composition is skewed to acidic residues. DNA is bound at residue Glu32. Over residues 80 to 104 (SRRKAKKAASKKVKKTKKKEKSVEG) the composition is skewed to basic residues. Residues 81 to 104 (RRKAKKAASKKVKKTKKKEKSVEG) form a required to bind DNA region.

This sequence belongs to the archaeal Rpo13 RNA polymerase subunit family. As to quaternary structure, part of the 13-subunit RNA polymerase complex. Rpo1N and Rpo5 form a cleft which docks Rpo13. Forms predominantly dimers in solution, although monomers and trimers can also be seen. Found associated with RNAP but also as a homodimer pool in the cytoplasm in vivo.

The protein resides in the cytoplasm. It carries out the reaction RNA(n) + a ribonucleoside 5'-triphosphate = RNA(n+1) + diphosphate. Functionally, DNA-dependent RNA polymerase (RNAP) catalyzes the transcription of DNA into RNA using the four ribonucleoside triphosphates as substrates. A molten-globule protein, it binds dsDNA in the RNAP, in vitro binds dsDNA but not ssDNA. Its position in RNAP implies it functions in both transcription initiation and elongation. The chain is DNA-directed RNA polymerase subunit Rpo13 from Saccharolobus shibatae (strain ATCC 51178 / DSM 5389 / JCM 8931 / NBRC 15437 / B12) (Sulfolobus shibatae).